The primary structure comprises 551 residues: L-lactate permease (551 aa).

A run of 12 helical transmembrane segments spans residues 13-33, 37-57, 69-89, 131-151, 159-179, 194-214, 244-264, 306-326, 366-386, 405-425, 438-458, and 530-550; these read NIWL…FALI, LKGY…ALLF, VVYG…AAVF, GAAG…GLGF, LCLI…PILV, MVGR…MAIM, FIGP…CLTL, FLFL…ALFA, FDWF…SIVW, LALP…SNYS, TGSA…FLTG, and IFTC…TWMI.

This sequence belongs to the lactate permease family.

It localises to the cell inner membrane. The enzyme catalyses (S)-lactate(in) + H(+)(in) = (S)-lactate(out) + H(+)(out). It catalyses the reaction (R)-lactate(in) + H(+)(in) = (R)-lactate(out) + H(+)(out). It carries out the reaction glycolate(in) + H(+)(in) = glycolate(out) + H(+)(out). Uptake of L-lactate across the membrane. Can also transport D-lactate and glycolate. Seems to be driven by a proton motive force. The chain is L-lactate permease (lldP) from Salmonella typhimurium (strain LT2 / SGSC1412 / ATCC 700720).